We begin with the raw amino-acid sequence, 192 residues long: CASP-like protein 1E1 (192 aa).

The tract at residues 1-22 (MDSQNKNSVDAMDGIESRGMKE) is disordered. The Cytoplasmic portion of the chain corresponds to 1 to 29 (MDSQNKNSVDAMDGIESRGMKERGGRTNS). A helical membrane pass occupies residues 30-50 (FLVLRVLAFVLTSTAAIVHGV). Residues 51–81 (NNQTETVPIQLTSSMPPLYVPVVAKWHYLSA) are Extracellular-facing. Residue asparagine 52 is glycosylated (N-linked (GlcNAc...) asparagine). The chain crosses the membrane as a helical span at residues 82–102 (FVFFVVSNAIACSYAAISVML). Over 103-118 (SFCGKKSMVPIILTLD) the chain is Cytoplasmic. Residues 119 to 139 (LLMVALLFSSNGAATAIGVMG) traverse the membrane as a helical segment. At 140–161 (YKGNSHVKWNKVCNVFGKFCNQ) the chain is on the extracellular side. The helical transmembrane segment at 162–182 (VAASVVLSLIGSIVFVLLVML) threads the bilayer. Topologically, residues 183–192 (TAFRLHNKSK) are cytoplasmic.

Belongs to the Casparian strip membrane proteins (CASP) family. Homodimer and heterodimers.

It localises to the cell membrane. This Ricinus communis (Castor bean) protein is CASP-like protein 1E1.